The chain runs to 262 residues: Small ribosomal subunit protein uS2 (262 aa).

The segment at Gly224–Ser246 is disordered.

Belongs to the universal ribosomal protein uS2 family.

In Lacticaseibacillus casei (strain BL23) (Lactobacillus casei), this protein is Small ribosomal subunit protein uS2.